Reading from the N-terminus, the 379-residue chain is 23S rRNA (uracil(747)-C(5))-methyltransferase RlmC (379 aa).

[4Fe-4S] cluster-binding residues include C3, C11, C14, and C87. Positions 212, 241, 262, and 309 each coordinate S-adenosyl-L-methionine. C336 acts as the Nucleophile in catalysis.

Belongs to the class I-like SAM-binding methyltransferase superfamily. RNA M5U methyltransferase family. RlmC subfamily.

It carries out the reaction uridine(747) in 23S rRNA + S-adenosyl-L-methionine = 5-methyluridine(747) in 23S rRNA + S-adenosyl-L-homocysteine + H(+). Its function is as follows. Catalyzes the formation of 5-methyl-uridine at position 747 (m5U747) in 23S rRNA. This is 23S rRNA (uracil(747)-C(5))-methyltransferase RlmC from Shewanella loihica (strain ATCC BAA-1088 / PV-4).